A 264-amino-acid polypeptide reads, in one-letter code: Thymidylate synthase (264 aa).

A dUMP-binding site is contributed by Arg21. A (6R)-5,10-methylene-5,6,7,8-tetrahydrofolate-binding site is contributed by His51. 126 to 127 (RR) contacts dUMP. Cys146 functions as the Nucleophile in the catalytic mechanism. DUMP-binding positions include 166–169 (RSCD), Asn177, and 207–209 (HLY). Asp169 provides a ligand contact to (6R)-5,10-methylene-5,6,7,8-tetrahydrofolate. A (6R)-5,10-methylene-5,6,7,8-tetrahydrofolate-binding site is contributed by Ala263.

Belongs to the thymidylate synthase family. Bacterial-type ThyA subfamily. As to quaternary structure, homodimer.

It is found in the cytoplasm. The catalysed reaction is dUMP + (6R)-5,10-methylene-5,6,7,8-tetrahydrofolate = 7,8-dihydrofolate + dTMP. The protein operates within pyrimidine metabolism; dTTP biosynthesis. Functionally, catalyzes the reductive methylation of 2'-deoxyuridine-5'-monophosphate (dUMP) to 2'-deoxythymidine-5'-monophosphate (dTMP) while utilizing 5,10-methylenetetrahydrofolate (mTHF) as the methyl donor and reductant in the reaction, yielding dihydrofolate (DHF) as a by-product. This enzymatic reaction provides an intracellular de novo source of dTMP, an essential precursor for DNA biosynthesis. The chain is Thymidylate synthase from Pectobacterium carotovorum subsp. carotovorum (strain PC1).